The sequence spans 156 residues: 3-hydroxyacyl-[acyl-carrier-protein] dehydratase FabZ (156 aa).

The active site involves H61.

This sequence belongs to the thioester dehydratase family. FabZ subfamily.

It is found in the cytoplasm. It carries out the reaction a (3R)-hydroxyacyl-[ACP] = a (2E)-enoyl-[ACP] + H2O. In terms of biological role, involved in unsaturated fatty acids biosynthesis. Catalyzes the dehydration of short chain beta-hydroxyacyl-ACPs and long chain saturated and unsaturated beta-hydroxyacyl-ACPs. The polypeptide is 3-hydroxyacyl-[acyl-carrier-protein] dehydratase FabZ (Acaryochloris marina (strain MBIC 11017)).